The primary structure comprises 182 residues: UPF0398 protein RBAM_020340 (182 aa).

This sequence belongs to the UPF0398 family.

The chain is UPF0398 protein RBAM_020340 from Bacillus velezensis (strain DSM 23117 / BGSC 10A6 / LMG 26770 / FZB42) (Bacillus amyloliquefaciens subsp. plantarum).